We begin with the raw amino-acid sequence, 566 residues long: Putative ABC transporter ATP-binding protein lp_0149 (566 aa).

2 ABC transporter domains span residues 6–247 and 302–536; these read ISFK…GLRE and LAIE…ASLA. ATP contacts are provided by residues 40–47 and 335–342; these read GPSGSGKS and GQNGTGKS.

It belongs to the ABC transporter superfamily.

It localises to the cell membrane. Probably part of an ABC transporter complex. Responsible for energy coupling to the transport system. The chain is Putative ABC transporter ATP-binding protein lp_0149 from Lactiplantibacillus plantarum (strain ATCC BAA-793 / NCIMB 8826 / WCFS1) (Lactobacillus plantarum).